A 178-amino-acid polypeptide reads, in one-letter code: MSNKESNVALQTLRVTKDMKDFLSHRIVGEPPANIKIEYQKIHRYRTCVCPSTGHISELCPSGDLILSLGAHRNVIAAATVYDVVKNKIKSTTSKAGTSSTLSSLGLSGFQKPKIGSKNKKTMFSKQNNSTNESDESGGEEGSSLNDLPKSDLINAIMELASQGRNNSKGKGKRGGKR.

Positions 113-178 (PKIGSKNKKT…KGKGKRGGKR (66 aa)) are disordered. Over residues 168 to 178 (SKGKGKRGGKR) the composition is skewed to basic residues.

The protein belongs to the phytoreovirus RNA-binding protein family.

It is found in the host cytoplasm. In terms of biological role, constituent of viral factories. Binds to ssRNA and dsRNA. The polypeptide is RNA-binding protein (Wound tumor virus (WTV)).